Here is a 505-residue protein sequence, read N- to C-terminus: RNA-splicing ligase RtcB homolog (505 aa).

5 residues coordinate Mn(2+): aspartate 119, cysteine 122, histidine 227, histidine 259, and histidine 353. GMP is bound at residue 226-230 (NHYAE). GMP is bound by residues 353 to 354 (HN), 402 to 405 (GGTM), serine 409, 428 to 431 (HGAG), and lysine 504. Catalysis depends on histidine 428, which acts as the GMP-histidine intermediate.

It belongs to the RtcB family. Catalytic component of the tRNA-splicing ligase complex. The cofactor is Mn(2+).

The catalysed reaction is a 3'-end 3'-phospho-ribonucleotide-RNA + a 5'-end dephospho-ribonucleoside-RNA + GTP = a ribonucleotidyl-ribonucleotide-RNA + GMP + diphosphate. The enzyme catalyses a 3'-end 2',3'-cyclophospho-ribonucleotide-RNA + a 5'-end dephospho-ribonucleoside-RNA + GTP + H2O = a ribonucleotidyl-ribonucleotide-RNA + GMP + diphosphate + H(+). Catalytic subunit of the tRNA-splicing ligase complex that acts by directly joining spliced tRNA halves to mature-sized tRNAs by incorporating the precursor-derived splice junction phosphate into the mature tRNA as a canonical 3',5'-phosphodiester. May act as an RNA ligase with broad substrate specificity, and may function toward other RNAs. This Nematostella vectensis (Starlet sea anemone) protein is RNA-splicing ligase RtcB homolog.